The sequence spans 289 residues: Agamous-like MADS-box protein AGL93 (289 aa).

Positions 18 to 78 (QTCFKKSSLS…GKLIKTWPDD (61 aa)) constitute an MADS-box domain. The tract at residues 151–197 (EFGQTRAVSSTTNPLSPPPSLIEDHRHQQRTEPLMSGVSNTEQDLST) is disordered. Residues 187 to 197 (GVSNTEQDLST) show a composition bias toward polar residues.

In terms of tissue distribution, expressed in pollen.

The protein resides in the nucleus. Probable transcription factor. In Arabidopsis thaliana (Mouse-ear cress), this protein is Agamous-like MADS-box protein AGL93.